Consider the following 293-residue polypeptide: NAD kinase (293 aa).

Aspartate 74 serves as the catalytic Proton acceptor. NAD(+) contacts are provided by residues 74-75, 148-149, histidine 159, arginine 176, aspartate 178, threonine 186, 189-194, and glutamine 248; these read DG, NE, and TAYSLS.

It belongs to the NAD kinase family. In terms of assembly, homodimer. The cofactor is a divalent metal cation.

It is found in the cytoplasm. It carries out the reaction NAD(+) + ATP = ADP + NADP(+) + H(+). Its function is as follows. Involved in the regulation of the intracellular balance of NAD and NADP, and is a key enzyme in the biosynthesis of NADP. Catalyzes specifically the phosphorylation on 2'-hydroxyl of the adenosine moiety of NAD to yield NADP. This is NAD kinase from Yersinia pestis.